The chain runs to 206 residues: Small ribosomal subunit protein uS4c (206 aa).

In terms of domain architecture, S4 RNA-binding spans 93-161; the sequence is MRLDNIVYRL…IEKNIELLDK (69 aa).

This sequence belongs to the universal ribosomal protein uS4 family. As to quaternary structure, part of the 30S ribosomal subunit. Contacts protein S5. The interaction surface between S4 and S5 is involved in control of translational fidelity.

The protein localises to the plastid. One of the primary rRNA binding proteins, it binds directly to 16S rRNA where it nucleates assembly of the body of the 30S subunit. Functionally, with S5 and S12 plays an important role in translational accuracy. This is Small ribosomal subunit protein uS4c (rps4) from Euglena longa (Euglenophycean alga).